Reading from the N-terminus, the 389-residue chain is Curcumin synthase 1 (389 aa).

Cys164 is a catalytic residue.

Belongs to the thiolase-like superfamily. Chalcone/stilbene synthases family. As to quaternary structure, homodimer. Expressed in both the leaf and rhizome, with higher expression in the rhizome.

It carries out the reaction (E)-feruloylacetyl-CoA + (E)-feruloyl-CoA + H2O = curcumin + CO2 + 2 CoA. The protein operates within secondary metabolite biosynthesis; flavonoid biosynthesis. Catalyzes the synthesis of curcumin by condensing feruloyl-CoA with a diketide-CoA in the curcuminoid biosynthesis. The protein is Curcumin synthase 1 (CURS1) of Curcuma longa (Turmeric).